A 100-amino-acid polypeptide reads, in one-letter code: Small ribosomal subunit protein uS14c (100 aa).

It belongs to the universal ribosomal protein uS14 family. Part of the 30S ribosomal subunit.

It localises to the plastid. Its subcellular location is the chloroplast. In terms of biological role, binds 16S rRNA, required for the assembly of 30S particles. In Angiopteris evecta (Mule's foot fern), this protein is Small ribosomal subunit protein uS14c.